The following is a 448-amino-acid chain: Carbamoyl phosphate synthase arginine-specific small chain (448 aa).

A mitochondrion-targeting transit peptide spans 1–27 (MFKNIARLASMARSAPRTTASFQTRFM). The 192-residue stretch at 224 to 415 (HIAVIDCGVK…LGQVHQYRAA (192 aa)) folds into the Glutamine amidotransferase type-1 domain. C304 (nucleophile) is an active-site residue. Residues H388 and E390 contribute to the active site.

Belongs to the CarA family. In terms of assembly, heterodimer composed of 2 chains; the small (or glutamine) chain promotes the hydrolysis of glutamine to ammonia, which is used by the large (or ammonia) chain to synthesize carbamoyl phosphate.

It localises to the mitochondrion matrix. The catalysed reaction is hydrogencarbonate + L-glutamine + 2 ATP + H2O = carbamoyl phosphate + L-glutamate + 2 ADP + phosphate + 2 H(+). It catalyses the reaction L-glutamine + H2O = L-glutamate + NH4(+). The protein operates within amino-acid biosynthesis; L-arginine biosynthesis; carbamoyl phosphate from bicarbonate: step 1/1. Its function is as follows. Small subunit of the arginine-specific carbamoyl phosphate synthase (CPSase). CPSase catalyzes the formation of carbamoyl phosphate from the ammonia moiety of glutamine, carbonate, and phosphate donated by ATP, the first step of the arginine biosynthetic pathway. The small subunit (glutamine amidotransferase) binds and cleaves glutamine to supply the large subunit with the substrate ammonia. In Yarrowia lipolytica (strain CLIB 122 / E 150) (Yeast), this protein is Carbamoyl phosphate synthase arginine-specific small chain (CPA1).